The chain runs to 100 residues: Aspartyl/glutamyl-tRNA(Asn/Gln) amidotransferase subunit C (100 aa).

This sequence belongs to the GatC family. Heterotrimer of A, B and C subunits.

It carries out the reaction L-glutamyl-tRNA(Gln) + L-glutamine + ATP + H2O = L-glutaminyl-tRNA(Gln) + L-glutamate + ADP + phosphate + H(+). The catalysed reaction is L-aspartyl-tRNA(Asn) + L-glutamine + ATP + H2O = L-asparaginyl-tRNA(Asn) + L-glutamate + ADP + phosphate + 2 H(+). In terms of biological role, allows the formation of correctly charged Asn-tRNA(Asn) or Gln-tRNA(Gln) through the transamidation of misacylated Asp-tRNA(Asn) or Glu-tRNA(Gln) in organisms which lack either or both of asparaginyl-tRNA or glutaminyl-tRNA synthetases. The reaction takes place in the presence of glutamine and ATP through an activated phospho-Asp-tRNA(Asn) or phospho-Glu-tRNA(Gln). The chain is Aspartyl/glutamyl-tRNA(Asn/Gln) amidotransferase subunit C from Streptococcus equi subsp. equi (strain 4047).